Consider the following 337-residue polypeptide: Phosphate acyltransferase (337 aa).

Belongs to the PlsX family. Homodimer. Probably interacts with PlsY.

It is found in the cytoplasm. It catalyses the reaction a fatty acyl-[ACP] + phosphate = an acyl phosphate + holo-[ACP]. Its pathway is lipid metabolism; phospholipid metabolism. In terms of biological role, catalyzes the reversible formation of acyl-phosphate (acyl-PO(4)) from acyl-[acyl-carrier-protein] (acyl-ACP). This enzyme utilizes acyl-ACP as fatty acyl donor, but not acyl-CoA. This chain is Phosphate acyltransferase, found in Listeria monocytogenes serotype 4b (strain F2365).